We begin with the raw amino-acid sequence, 403 residues long: Dual-specificity RNA methyltransferase RlmN (403 aa).

Positions 1–25 (MTKIPMQPADSTPATFHPNAPTKTN) are disordered. The active-site Proton acceptor is the E112. The Radical SAM core domain occupies 123 to 364 (VNGRKTLCIS…VCTIRQTRGD (242 aa)). A disulfide bridge connects residues C130 and C370. C137, C141, and C144 together coordinate [4Fe-4S] cluster. S-adenosyl-L-methionine is bound by residues 193–194 (GE), S225, 247–249 (SLH), and N327. C370 serves as the catalytic S-methylcysteine intermediate.

The protein belongs to the radical SAM superfamily. RlmN family. [4Fe-4S] cluster is required as a cofactor.

The protein localises to the cytoplasm. The catalysed reaction is adenosine(2503) in 23S rRNA + 2 reduced [2Fe-2S]-[ferredoxin] + 2 S-adenosyl-L-methionine = 2-methyladenosine(2503) in 23S rRNA + 5'-deoxyadenosine + L-methionine + 2 oxidized [2Fe-2S]-[ferredoxin] + S-adenosyl-L-homocysteine. It catalyses the reaction adenosine(37) in tRNA + 2 reduced [2Fe-2S]-[ferredoxin] + 2 S-adenosyl-L-methionine = 2-methyladenosine(37) in tRNA + 5'-deoxyadenosine + L-methionine + 2 oxidized [2Fe-2S]-[ferredoxin] + S-adenosyl-L-homocysteine. Specifically methylates position 2 of adenine 2503 in 23S rRNA and position 2 of adenine 37 in tRNAs. m2A2503 modification seems to play a crucial role in the proofreading step occurring at the peptidyl transferase center and thus would serve to optimize ribosomal fidelity. This is Dual-specificity RNA methyltransferase RlmN from Psychrobacter sp. (strain PRwf-1).